A 305-amino-acid polypeptide reads, in one-letter code: tRNA dimethylallyltransferase (305 aa).

An ATP-binding site is contributed by 15-22; sequence GPTASGKS. 17–22 is a substrate binding site; that stretch reads TASGKS. 2 interaction with substrate tRNA regions span residues 40 to 43 and 164 to 168; these read DSMQ and QRIVR.

This sequence belongs to the IPP transferase family. As to quaternary structure, monomer. It depends on Mg(2+) as a cofactor.

It carries out the reaction adenosine(37) in tRNA + dimethylallyl diphosphate = N(6)-dimethylallyladenosine(37) in tRNA + diphosphate. Its function is as follows. Catalyzes the transfer of a dimethylallyl group onto the adenine at position 37 in tRNAs that read codons beginning with uridine, leading to the formation of N6-(dimethylallyl)adenosine (i(6)A). This Sinorhizobium medicae (strain WSM419) (Ensifer medicae) protein is tRNA dimethylallyltransferase.